Here is a 62-residue protein sequence, read N- to C-terminus: Alpha-toxin Tf4 (62 aa).

One can recognise an LCN-type CS-alpha/beta domain in the interval 2-62 (KEGYPADSKG…SVWDSATNKC (61 aa)). 4 disulfide bridges follow: C12/C62, C16/C38, C24/C43, and C28/C45. C62 is modified (cysteine amide).

In terms of tissue distribution, expressed by the venom gland.

The protein resides in the secreted. Its function is as follows. Alpha toxins bind voltage-independently at site-3 of sodium channels (Nav) and inhibit the inactivation of the activated channels, thereby blocking neuronal transmission. This toxin is toxic to frogs but non-toxic to insect larvae (T.molitor), mammals (rats) and crustaceans (crabs) at the doses assayed. The sequence is that of Alpha-toxin Tf4 from Tityus fasciolatus (Central Brazilian scorpion).